The primary structure comprises 239 residues: Exosome complex component Rrp4 (239 aa).

Positions 67 to 139 constitute an S1 motif domain; it reads GDFVVGIVEE…PVQRVELSLL (73 aa). The KH domain maps to 151–217; sequence QGGQVVEIDP…LAVRAIREIE (67 aa).

This sequence belongs to the RRP4 family. As to quaternary structure, component of the archaeal exosome complex. Forms a trimer of Rrp4 and/or Csl4 subunits. The trimer associates with a hexameric ring-like arrangement composed of 3 Rrp41-Rrp42 heterodimers.

Its subcellular location is the cytoplasm. Non-catalytic component of the exosome, which is a complex involved in RNA degradation. Increases the RNA binding and the efficiency of RNA degradation. Confers strong poly(A) specificity to the exosome. This is Exosome complex component Rrp4 from Methanopyrus kandleri (strain AV19 / DSM 6324 / JCM 9639 / NBRC 100938).